A 1134-amino-acid polypeptide reads, in one-letter code: Ubinuclein-1 (1134 aa).

Disordered regions lie at residues 1–38 and 78–98; these read MSEP…HQDC and LQPG…EKER. The segment at 1–166 is sufficient for interaction with HIRA; sequence MSEPHRVQFT…YGGFYINSGT (166 aa). Basic and acidic residues-rich tracts occupy residues 25 to 38 and 81 to 98; these read RKEE…HQDC and GDKK…EKER. Threonine 166 is modified (phosphothreonine). The disordered stretch occupies residues 171 to 220; it reads QASESEDDFIKEKKKKSPKKRKLKEGGEKIKKKKKDDTYDKEKKSKKSKF. Phosphoserine occurs at positions 173 and 175. Positions 182 to 193 are enriched in basic residues; the sequence is EKKKKSPKKRKL. Basic and acidic residues predominate over residues 194–213; that stretch reads KEGGEKIKKKKKDDTYDKEK. Lysine 222 is modified (N6-acetyllysine). Residues 253-268 show a composition bias toward basic and acidic residues; it reads QKEKEAQKKREEEHKP. Disordered regions lie at residues 253-282, 321-358, 480-504, and 594-660; these read QKEK…LREL, SESP…EGLP, EEEK…KGGR, and PSKI…LEDS. A phosphoserine mark is found at serine 323, serine 336, serine 338, and serine 493. Residues 479 to 542 are a coiled coil; it reads LEEEKDKEQR…SQDLERNNKA (64 aa). Basic and acidic residues-rich tracts occupy residues 480–493 and 598–610; these read EEEK…RICS and KVKE…DKKV. 2 positions are modified to phosphoserine: serine 660 and serine 677. 2 disordered regions span residues 712-836 and 852-986; these read TEEK…SPTQ and QGFH…GVAK. Composition is skewed to low complexity over residues 792–804 and 856–891; these read GPQV…GPQV and PSAP…KPHS. A compositionally biased stretch (polar residues) spans 892 to 905; that stretch reads VSSAGSSYKNNPFA. Over residues 906 to 932 the composition is skewed to low complexity; that stretch reads SSISKHGVSSGSSSSGGTPVQSSVSGS. Residues 941–950 show a composition bias toward polar residues; it reads SVGQATSRPV. Gly residues predominate over residues 973-982; the sequence is PNGDSSGGTQ. Serine 1025 is modified (phosphoserine). Over residues 1093–1108 the composition is skewed to low complexity; the sequence is GLHSSPPHAAPLPHAA. The segment at 1093 to 1134 is disordered; the sequence is GLHSSPPHAAPLPHAAVPTHIPQSLPGASQLHGKGPAVPRKL.

The protein belongs to the ubinuclein family. As to quaternary structure, component of a complex that includes at least ASF1A, CABIN1, HIRA, histone H3.3 and UBN1. Interacts with HIRA (via WD repeat domain); the interaction is direct. Interacts with ASF1A, CEBPA, TJP1, TJP2 and TJP3. (Microbial infection) Interacts with Epstein-Barr virus BZLF1. In terms of tissue distribution, ubiquitous. Also expressed in numerous tumors and cancer cell lines.

Its subcellular location is the nucleus. It is found in the nucleoplasm. The protein localises to the PML body. It localises to the cell junction. The protein resides in the tight junction. Functionally, acts as a novel regulator of senescence. Involved in the formation of senescence-associated heterochromatin foci (SAHF), which represses expression of proliferation-promoting genes. Binds to proliferation-promoting genes. May be required for replication-independent chromatin assembly. The sequence is that of Ubinuclein-1 (UBN1) from Homo sapiens (Human).